The chain runs to 515 residues: Envelope glycoprotein (515 aa).

The N-terminal stretch at 1–33 (MPKKRRSRRRPQPIIRWVSLTLTLLALCRPIQT) is a signal peptide. The Extracellular segment spans residues 34-435 (WRCSLSLGNQ…LGLTAWVRET (402 aa)). Residues Asn129 and Asn203 are each glycosylated (N-linked (GlcNAc...) asparagine; by host). The CXXC signature appears at 212–215 (CAIC). 3 cysteine pairs are disulfide-bonded: Cys212-Cys215, Cys212-Cys392, and Cys384-Cys391. Asn230, Asn251, Asn256, Asn271, and Asn287 each carry an N-linked (GlcNAc...) asparagine; by host glycan. A fusion peptide region spans residues 304-324 (VAALTLGLALSVGLTGINVAV). Coiled-coil stretches lie at residues 330–376 (QRLT…WLYI) and 388–420 (NEPCCFLRIQNDSIIRLGDLQPLSQRVSTDWQW). The N-linked (GlcNAc...) asparagine; by host glycan is linked to Asn351. Positions 365–381 (AQNRRGLDWLYIRLGFQ) are immunosuppression. The CX6CC signature appears at 384 to 392 (CPTINEPCC). Asn398 is a glycosylation site (N-linked (GlcNAc...) asparagine; by host). A helical membrane pass occupies residues 436-456 (IHSVLSLFLLALFLLFLAPCL). Cys455 carries S-palmitoyl cysteine; by host lipidation. At 457 to 515 (IKCLTSRLLKLLRQAPHFPEISLTPKPDSDYQALLPSAPEIYSHLSPVKPDYINLRPCP) the chain is on the cytoplasmic side.

The mature envelope protein (Env) consists of a trimer of SU-TM heterodimers attached by a labile interchain disulfide bond. In terms of processing, specific enzymatic cleavages in vivo yield mature proteins. Envelope glycoproteins are synthesized as an inactive precursor that is N-glycosylated and processed likely by host cell furin or by a furin-like protease in the Golgi to yield the mature SU and TM proteins. The cleavage site between SU and TM requires the minimal sequence [KR]-X-[KR]-R. The CXXC motif is highly conserved across a broad range of retroviral envelope proteins. It is thought to participate in the formation of a labile disulfide bond possibly with the CX6CC motif present in the transmembrane protein. Isomerization of the intersubunit disulfide bond to an SU intrachain disulfide bond is thought to occur upon receptor recognition in order to allow membrane fusion. Post-translationally, the transmembrane protein is palmitoylated.

Its subcellular location is the virion membrane. The protein resides in the host cell membrane. Functionally, the surface protein (SU) attaches the virus to the host cell by binding to its receptor. This interaction triggers the refolding of the transmembrane protein (TM) and is thought to activate its fusogenic potential by unmasking its fusion peptide. Fusion occurs at the host cell plasma membrane. Its function is as follows. The transmembrane protein (TM) acts as a class I viral fusion protein. Under the current model, the protein has at least 3 conformational states: pre-fusion native state, pre-hairpin intermediate state, and post-fusion hairpin state. During viral and target cell membrane fusion, the coiled coil regions (heptad repeats) assume a trimer-of-hairpins structure, positioning the fusion peptide in close proximity to the C-terminal region of the ectodomain. The formation of this structure appears to drive apposition and subsequent fusion of viral and target cell membranes. Membranes fusion leads to delivery of the nucleocapsid into the cytoplasm. The polypeptide is Envelope glycoprotein (env) (Bovine leukemia virus (isolate American FLK) (BLV)).